The chain runs to 728 residues: 1,4-alpha-glucan branching enzyme GlgB (728 aa).

D405 functions as the Nucleophile in the catalytic mechanism. E458 functions as the Proton donor in the catalytic mechanism.

The protein belongs to the glycosyl hydrolase 13 family. GlgB subfamily. As to quaternary structure, monomer.

It catalyses the reaction Transfers a segment of a (1-&gt;4)-alpha-D-glucan chain to a primary hydroxy group in a similar glucan chain.. Its pathway is glycan biosynthesis; glycogen biosynthesis. Functionally, catalyzes the formation of the alpha-1,6-glucosidic linkages in glycogen by scission of a 1,4-alpha-linked oligosaccharide from growing alpha-1,4-glucan chains and the subsequent attachment of the oligosaccharide to the alpha-1,6 position. This Salmonella paratyphi B (strain ATCC BAA-1250 / SPB7) protein is 1,4-alpha-glucan branching enzyme GlgB.